The following is a 700-amino-acid chain: Elongation factor G 1 (700 aa).

In terms of domain architecture, tr-type G spans 8-290; sequence ERYRNIGISA…AVIDYLPSPA (283 aa). GTP-binding positions include 17–24, 88–92, and 142–145; these read AHIDAGKT, DTPGH, and NKMD.

It belongs to the TRAFAC class translation factor GTPase superfamily. Classic translation factor GTPase family. EF-G/EF-2 subfamily.

The protein localises to the cytoplasm. Catalyzes the GTP-dependent ribosomal translocation step during translation elongation. During this step, the ribosome changes from the pre-translocational (PRE) to the post-translocational (POST) state as the newly formed A-site-bound peptidyl-tRNA and P-site-bound deacylated tRNA move to the P and E sites, respectively. Catalyzes the coordinated movement of the two tRNA molecules, the mRNA and conformational changes in the ribosome. This is Elongation factor G 1 from Bordetella bronchiseptica (strain ATCC BAA-588 / NCTC 13252 / RB50) (Alcaligenes bronchisepticus).